Reading from the N-terminus, the 1220-residue chain is MGKKQKNKSEDSTKDDIDLDALAAEIEGAGAAKEQEPQKSKGKKKKEKKKQDFDEDDILKELEELSLEAQGIKADRETVAVKPTENNEEEFTSKDKKKKGQKGKKQSFDDNDSEELEDKDSKSKKTAKPKVEMYSGSDDDDDFNKLPKKAKGKAQKSNKKWDGSEEDEDNSKKIKERSRINSSGESGDESDEFLQSRKGQKKNQKNKPGPNIESGNEDDDASFKIKTVAQKKAEKKERERKKRDEEKAKLRKLKEKEELETGKKDQSKQKESQRKFEEETVKSKVTVDTGVIPASEEKAETPTAAEDDNEGDKKKKDKKKKKGEKEEKEKEKKKGPSKATVKAMQEALAKLKEEEERQKREEEERIKRLEELEAKRKEEERLEQEKRERKKQKEKERKERLKKEGKLLTKSQREARARAEATLKLLQAQGVEVPSKDSLPKKRPIYEDKKRKKIPQQLESKEVSESMELCAAVEVMEQGVPEKEETPPPVEPEEEEDTEDAGLDDWEAMASDEETEKVEGNKVHIEVKENPEEEEEEEEEEEEDEESEEEEEEEGESEGSEGDEEDEKVSDEKDSGKTLDKKPSKEMSSDSEYDSDDDRTKEERAYDKAKRRIEKRRLEHSKNVNTEKLRAPIICVLGHVDTGKTKILDKLRHTHVQDGEAGGITQQIGATNVPLEAINEQTKMIKNFDRENVRIPGMLIIDTPGHESFSNLRNRGSSLCDIAILVVDIMHGLEPQTIESINLLKSKKCPFIVALNKIDRLYDWKKSPDSDVAATLKKQKKNTKDEFEERAKAIIVEFAQQGLNAALFYENKDPRTFVSLVPTSAHTGDGMGSLIYLLVELTQTMLSKRLAHCEELRAQVMEVKALPGMGTTIDVILINGRLKEGDTIIVPGVEGPIVTQIRGLLLPPPMKELRVKNQYEKHKEVEAAQGVKILGKDLEKTLAGLPLLVAYKEDEIPVLKDELIHELKQTLNAIKLEEKGVYVQASTLGSLEALLEFLKTSEVPYAGINIGPVHKKDVMKASVMLEHDPQYAVILAFDVRIERDAQEMADSLGVRIFSAEIIYHLFDAFTKYRQDYKKQKQEEFKHIAVFPCKIKILPQYIFNSRDPIVMGVTVEAGQVKQGTPMCVPSKNFVDIGIVTSIEINHKQVDVAKKGQEVCVKIEPIPGESPKMFGRHFEATDILVSKISRQSIDALKDWFRDEMQKSDWQLIVELKKVFEII.

2 disordered regions span residues 1-417 and 430-608; these read MGKK…EARA and GVEV…AYDK. Over residues 7–16 the composition is skewed to basic and acidic residues; sequence NKSEDSTKDD. Residues 20–32 show a composition bias toward low complexity; that stretch reads DALAAEIEGAGAA. Position 66 is a phosphoserine (Ser-66). The span at 95 to 105 shows a compositional bias: basic residues; it reads DKKKKGQKGKK. Residues Ser-107 and Ser-113 each carry the phosphoserine modification. Positions 109–118 are enriched in acidic residues; that stretch reads DDNDSEELED. Phosphotyrosine is present on Tyr-134. Phosphoserine occurs at positions 135 and 137. Residues 146–158 show a composition bias toward basic residues; that stretch reads LPKKAKGKAQKSN. Phosphoserine is present on residues Ser-164, Ser-171, Ser-182, Ser-183, Ser-186, Ser-190, Ser-214, and Ser-222. Residues 170–179 are compositionally biased toward basic and acidic residues; sequence NSKKIKERSR. Residues 231-282 are compositionally biased toward basic and acidic residues; sequence KKAEKKERERKKRDEEKAKLRKLKEKEELETGKKDQSKQKESQRKFEEETVK. The residue at position 301 (Thr-301) is a Phosphothreonine. Composition is skewed to basic and acidic residues over residues 323–334, 349–417, and 434–449; these read GEKEEKEKEKKK, AKLK…EARA, and PSKDSLPKKRPIYEDK. A Phosphoserine modification is found at Ser-438. A compositionally biased stretch (acidic residues) spans 491–516; sequence EPEEEEDTEDAGLDDWEAMASDEETE. Thr-498 carries the phosphothreonine modification. The segment covering 517–530 has biased composition (basic and acidic residues); that stretch reads KVEGNKVHIEVKEN. Positions 531-569 are enriched in acidic residues; it reads PEEEEEEEEEEEEDEESEEEEEEEGESEGSEGDEEDEKV. Phosphoserine is present on residues Ser-547, Ser-557, Ser-560, Ser-588, Ser-589, Ser-591, and Ser-595. Residues 570–588 are compositionally biased toward basic and acidic residues; sequence SDEKDSGKTLDKKPSKEMS. Residues 598 to 608 are compositionally biased toward basic and acidic residues; it reads DRTKEERAYDK. Residues 629–846 enclose the tr-type G domain; it reads LRAPIICVLG…LLVELTQTML (218 aa). Residues 638 to 645 are G1; the sequence is GHVDTGKT. Residues 640–646 and 663–665 contribute to the GTP site; these read VDTGKTK and GIT. Positions 663–667 are G2; sequence GITQQ. The segment at 702–705 is G3; it reads DTPG. Residue His-706 is part of the active site. GTP contacts are provided by residues 756 to 757, 759 to 760, and 825 to 826; these read NK, DR, and AH. Residues 756 to 759 form a G4 region; the sequence is NKID. The segment at 824–826 is G5; sequence SAH. Ser-1168 is subject to Phosphoserine.

This sequence belongs to the TRAFAC class translation factor GTPase superfamily. Classic translation factor GTPase family. IF-2 subfamily. In terms of assembly, interacts through its C-terminal domain (CTD) with the CTD of eIF1A (EIF1AX) or with the CTD of EIF5 (mutually exclusive) through a common binding site. Interacts with eIF1A (EIF1AX) from the location of the start codon by the 43S complex until the formation of the 80S complex. Interacts with ANXA5 in a calcium and phospholipid-dependent manner. Requires a monovalent cation as cofactor. (Microbial infection) Cleaved and inactivated by the protease 3C of poliovirus, Coxsackievirus B3 and Human rhinovirus 14, allowing the virus to shutoff the host cell translation.

The protein localises to the cytoplasm. It catalyses the reaction GTP + H2O = GDP + phosphate + H(+). Functionally, plays a role in translation initiation. Ribosome-dependent GTPase that promotes the joining of the 60S ribosomal subunit to the pre-initiation complex to form the 80S initiation complex with the initiator methionine-tRNA in the P-site base paired to the start codon. Together with eIF1A (EIF1AX), actively orients the initiator methionine-tRNA in a conformation that allows 60S ribosomal subunit joining to form the 80S initiation complex. Is released after formation of the 80S initiation complex. Its GTPase activity is not essential for ribosomal subunits joining, but GTP hydrolysis is needed for eIF1A (EIF1AX) ejection quickly followed by EIF5B release to form elongation-competent ribosomes. In contrast to its procaryotic homolog, does not promote recruitment of Met-rRNA to the small ribosomal subunit. This Homo sapiens (Human) protein is Eukaryotic translation initiation factor 5B (EIF5B).